Consider the following 122-residue polypeptide: Iron-sulfur cluster assembly protein SufA (122 aa).

[2Fe-2S] cluster is bound by residues C50, C114, and C116. [4Fe-4S] cluster is bound by residues C50, C114, and C116.

Belongs to the HesB/IscA family. Homodimer. Interacts with SufB and SufC.

Functionally, member of gene cluster sufABCDSE that mediates iron-sulfur cluster assembly under oxidative stress and iron limitation conditions. Binds [2Fe-2S] and [4Fe-4S] clusters by mobilizing sulfur atoms provided by the SufS-SufE cysteine desulfurase system and then transfers the assembled Fe-S clusters to target proteins including ferredoxin and aconitase. Seems to act as a Fe-S cluster carrier rather than a scaffold, this role being performed by SufB and SufC. The chain is Iron-sulfur cluster assembly protein SufA (sufA) from Escherichia coli (strain K12).